Consider the following 378-residue polypeptide: Prolargin (378 aa).

The signal sequence occupies residues 1–21; it reads MRASFFWLLPLLLILASVAQG. Residues 22 to 62 are disordered; the sequence is QPTRPKPGIRRKPKPRPTPRFPQAPEPAEPTDLPPPLPPGP. The segment covering 28 to 38 has biased composition (basic residues); the sequence is PGIRRKPKPRP. A compositionally biased stretch (pro residues) spans 39 to 62; it reads TPRFPQAPEPAEPTDLPPPLPPGP. LRR repeat units follow at residues 91–110, 111–134, 135–158, 159–179, 180–203, 204–229, 230–250, 251–274, 275–299, 300–319, 320–358, and 359–378; these read RRVP…NNFI, TELP…NNRI, RKVD…KNQL, EEVP…QNLI, SRIP…HNRL, SDGV…HNIL, RKMP…SNKI, ETIP…YNKL, SDRG…HNKI, SNVP…NNSI, EKIN…GNFL, and KPPI…SVVI. An N-linked (GlcNAc...) asparagine glycan is attached at asparagine 120. Residues asparagine 285, asparagine 316, and asparagine 323 are each glycosylated (N-linked (GlcNAc...) asparagine). An intrachain disulfide couples cysteine 328 to cysteine 369.

Belongs to the small leucine-rich proteoglycan (SLRP) family. SLRP class II subfamily. In terms of assembly, binds the basement membrane heparan sulfate proteoglycan perlecan and triple helical collagens type I and type II. In terms of processing, glycosylated; contains heparan sulfate. In terms of tissue distribution, expressed in cartilage throughout both fetal development and postnatal life. It is also expressed in the developing embryo prior to skeletogenesis. In adult, highest expression in lung, lower levels in cardiac and skeletal muscle.

It localises to the secreted. The protein resides in the extracellular space. Its subcellular location is the extracellular matrix. May anchor basement membranes to the underlying connective tissue. This Mus musculus (Mouse) protein is Prolargin (Prelp).